The primary structure comprises 494 residues: MEVVEAAAAQLETLKFNGTDFGVGEGPAAPSPGSAPVPGTQPPLQSFEGSPDAGQTVEVKPAGEQPLQPVLNAVAAGTPAPQPQPPAESPACGDCVTSPGAAEPARAPDSLETSDSDSDSDSETDSDSSSSSSSSSSSSSSSSSSCISLPPVLSDGDDDLQIEKENKNFPLKTKDELLLNELPSVEELTIILPEDIELKPLGMVSSIIEQLVIIESMTNLPPVNEETVIFKSDRQAAGKIFEIFGPVAHPFYVLRFNSSDHIESKGIKIKETMYFAPSMKDFTQYIFTEKLKQDKGSDASWKNDQEPPPEALDFSDDEKEKEAKQRKKSQIQGRKKLKSEFNEPGEDFTEVHQNWNAHSSASEHAKGYRNREFTRGFSRARYPRSCHGRPPPQHFYNSEHMVSQETSGFPSQRQNNPIMPQYPFPLPVFDMHNFPLRPPPPPPPPPVNMGWATPNMAAHPLLNLPYSLPPPPPPPPLPPPPSSGDSNSHFGPYY.

The residue at position 1 (Met1) is an N-acetylmethionine. Disordered regions lie at residues 18-159 (GTDF…GDDD), 296-347 (GSDA…PGED), and 462-494 (LNLPYSLPPPPPPPPLPPPPSSGDSNSHFGPYY). The span at 29–41 (APSPGSAPVPGTQ) shows a compositional bias: pro residues. Acidic residues predominate over residues 112-126 (ETSDSDSDSDSETDS). Low complexity predominate over residues 127–145 (DSSSSSSSSSSSSSSSSSS). Over residues 296-305 (GSDASWKNDQ) the composition is skewed to basic and acidic residues. Ser315 carries the phosphoserine modification. A compositionally biased stretch (basic residues) spans 324 to 337 (KQRKKSQIQGRKKL). Residue Lys338 forms a Glycyl lysine isopeptide (Lys-Gly) (interchain with G-Cter in SUMO2) linkage. Positions 467–482 (SLPPPPPPPPLPPPPS) are enriched in pro residues. Polar residues predominate over residues 484–494 (GDSNSHFGPYY).

It belongs to the NAF1 family. In terms of assembly, during assembly of the complex, component of the small nucleolar ribonucleoprotein particles containing H/ACA-type snoRNAs (H/ACA snoRNPs) which contains NOLA2/NHP2, NOLA3/NOP10, NAF1 and DKC1/NOLA4. Interacts directly with DKC1/NOLA4.

Its subcellular location is the cytoplasm. It is found in the nucleus. Functionally, RNA-binding protein required for the maturation of box H/ACA snoRNPs complex and ribosome biogenesis. During assembly of the H/ACA snoRNPs complex, it associates with the complex and disappears during maturation of the complex and is replaced by NOLA1/GAR1 to yield mature H/ACA snoRNPs complex. Probably competes with NOLA1/GAR1 for binding with DKC1/NOLA4. This chain is H/ACA ribonucleoprotein complex non-core subunit NAF1 (NAF1), found in Homo sapiens (Human).